The sequence spans 763 residues: Phosphoglycerol transferase I (763 aa).

Helical transmembrane passes span 1–21 (MSEL…AWKA), 26–46 (WWFA…ITLF), 77–97 (ILPG…LGWI), and 108–128 (FGYS…SPAF).

It belongs to the OpgB family.

It localises to the cell inner membrane. It carries out the reaction a phosphatidylglycerol + a membrane-derived-oligosaccharide D-glucose = a 1,2-diacyl-sn-glycerol + a membrane-derived-oligosaccharide 6-(glycerophospho)-D-glucose.. The protein operates within glycan metabolism; osmoregulated periplasmic glucan (OPG) biosynthesis. Its function is as follows. Transfers a phosphoglycerol residue from phosphatidylglycerol to the membrane-bound nascent glucan backbones. The polypeptide is Phosphoglycerol transferase I (Escherichia coli O45:K1 (strain S88 / ExPEC)).